A 342-amino-acid chain; its full sequence is Ion-translocating oxidoreductase complex subunit D (342 aa).

3 helical membrane-spanning segments follow: residues 42 to 62, 68 to 90, and 124 to 144; these read GSVINVLWAVIVALVSEALFL, NIAFYLKDYSAVVTAVLLGLALP, and AMVGYVLLLISFPVAMTQWLA. T171 is modified (FMN phosphoryl threonine). Helical transmembrane passes span 200-220, 227-247, 252-272, 286-306, and 308-328; these read FAGLGWEWVNLAFLLGGLYLI, WHIPAGFLAGLGLPALLAWLI, FADPLFQLFSGGAMLGAFFIA, LVYALLIGVLIWVIRTFGGYP, and AVAFSVLLLNLSAPFIDYYTQ.

It belongs to the NqrB/RnfD family. In terms of assembly, the complex is composed of six subunits: RnfA, RnfB, RnfC, RnfD, RnfE and RnfG. FMN is required as a cofactor.

It localises to the cell inner membrane. Part of a membrane-bound complex that couples electron transfer with translocation of ions across the membrane. The chain is Ion-translocating oxidoreductase complex subunit D from Alcanivorax borkumensis (strain ATCC 700651 / DSM 11573 / NCIMB 13689 / SK2).